We begin with the raw amino-acid sequence, 407 residues long: Serine hydroxymethyltransferase (407 aa).

Residues leucine 120 and 124-126 (GHL) each bind (6S)-5,6,7,8-tetrahydrofolate. Lysine 229 carries the post-translational modification N6-(pyridoxal phosphate)lysine.

This sequence belongs to the SHMT family. As to quaternary structure, homodimer. Pyridoxal 5'-phosphate serves as cofactor.

Its subcellular location is the cytoplasm. The catalysed reaction is (6R)-5,10-methylene-5,6,7,8-tetrahydrofolate + glycine + H2O = (6S)-5,6,7,8-tetrahydrofolate + L-serine. It participates in one-carbon metabolism; tetrahydrofolate interconversion. It functions in the pathway amino-acid biosynthesis; glycine biosynthesis; glycine from L-serine: step 1/1. Functionally, catalyzes the reversible interconversion of serine and glycine with tetrahydrofolate (THF) serving as the one-carbon carrier. This reaction serves as the major source of one-carbon groups required for the biosynthesis of purines, thymidylate, methionine, and other important biomolecules. Also exhibits THF-independent aldolase activity toward beta-hydroxyamino acids, producing glycine and aldehydes, via a retro-aldol mechanism. The chain is Serine hydroxymethyltransferase from Deinococcus deserti (strain DSM 17065 / CIP 109153 / LMG 22923 / VCD115).